The primary structure comprises 274 residues: Peroxiredoxin-4 (274 aa).

The signal sequence occupies residues 1-40 (MEAPPPPPPLPATTLAPGRSRKLLLLPLLLFLLRAEAVRG). One can recognise a Thioredoxin domain in the interval 82-240 (AKISKPAPYW…TLRLVQAFQY (159 aa)). C127 (cysteine sulfenic acid (-SOH) intermediate) is an active-site residue.

The protein belongs to the peroxiredoxin family. AhpC/Prx1 subfamily. Homodimer; disulfide-linked, upon oxidation. 5 homodimers assemble to form a ring-like decamer. The enzyme can be inactivated by further oxidation of the cysteine sulfenic acid (C(P)-SOH) to sulphinic acid (C(P)-SO2H) and sulphonic acid (C(P)-SO3H) instead of its condensation to a disulfide bond.

It localises to the cytoplasm. The protein resides in the endoplasmic reticulum. The enzyme catalyses a hydroperoxide + [thioredoxin]-dithiol = an alcohol + [thioredoxin]-disulfide + H2O. In terms of biological role, thiol-specific peroxidase that catalyzes the reduction of hydrogen peroxide and organic hydroperoxides to water and alcohols, respectively. Plays a role in cell protection against oxidative stress by detoxifying peroxides and as sensor of hydrogen peroxide-mediated signaling events. Regulates the activation of NF-kappa-B in the cytosol by a modulation of I-kappa-B-alpha phosphorylation. In Bos taurus (Bovine), this protein is Peroxiredoxin-4 (PRDX4).